The primary structure comprises 495 residues: Averantin hydroxylase (495 aa).

Residues 12–32 (ILLLIVLTVLTPPSLALYRLW) form a helical membrane-spanning segment. 2 N-linked (GlcNAc...) asparagine glycosylation sites follow: asparagine 258 and asparagine 289. Cysteine 436 contacts heme.

The protein belongs to the cytochrome P450 family. The cofactor is heme.

The protein resides in the membrane. The enzyme catalyses (1'S)-averantin + reduced [NADPH--hemoprotein reductase] + O2 = (1'S,5'R)-5'-hydroxyaverantin + oxidized [NADPH--hemoprotein reductase] + H2O. It carries out the reaction (1'S)-averantin + reduced [NADPH--hemoprotein reductase] + O2 = (1'S,5'S)-5'-hydroxyaverantin + oxidized [NADPH--hemoprotein reductase] + H2O + H(+). It functions in the pathway mycotoxin biosynthesis; aflatoxin biosynthesis. Functionally, averantin hydroxylase; part of the gene cluster that mediates the biosynthesis of aflatoxins, a group of polyketide-derived furanocoumarins, and part of the most toxic and carcinogenic compounds among the known mycotoxins. The four major aflatoxins produced by A.parasiticus are aflatoxin B1 (AFB1), aflatoxin B2 (AFB2), aflatoxin G1 (AFG1) and aflatoxin G2 (AFG2). Within the aflatoxin pathway, the cytochrome P450 monooxygenase aflG catalyzes the hydroxylation of AVN to 5'hydroxyaverantin (HAVN). The biosynthesis of aflatoxins begins with the norsolorinic acid synthase aflC that combines a hexanoyl starter unit produced by the fatty acid synthase aflA/aflB and 7 malonyl-CoA extender units to synthesize the precursor NOR. The second step is the conversion of NOR to averantin and requires the norsolorinic acid ketoreductase aflD, which catalyzes the dehydration of norsolorinic acid to form (1'S)-averantin. The norsolorinic acid reductases aflE and aflF may also play a role in the conversion of NOR to AVN. The cytochrome P450 monooxygenase aflG then catalyzes the hydroxylation of AVN to 5'hydroxyaverantin (HAVN). The next step is performed by the 5'-hydroxyaverantin dehydrogenase aflH that transforms HAVN to 5'-oxoaverantin (OAVN) which is further converted to averufin (AVF) by aflK that plays a dual role in the pathway, as a 5'-oxoaverantin cyclase that mediates conversion of 5'-oxoaverantin, as well as a versicolorin B synthase in a later step in the pathway. The averufin oxidase aflI catalyzes the conversion of AVF to versiconal hemiacetal acetate (VHA). VHA is then the substrate for the versiconal hemiacetal acetate esterase aflJ to yield versiconal (VAL). Versicolorin B synthase aflK then converts VAL to versicolorin B (VERB) by closing the bisfuran ring of aflatoxin which is required for DNA-binding, thus giving to aflatoxin its activity as a mutagen. Then, the activity of the versicolorin B desaturase aflL leads to versicolorin A (VERA). A branch point starts from VERB since it can also be converted to dihydrodemethylsterigmatocystin (DMDHST), probably also by aflL, VERA being a precursor for aflatoxins B1 and G1, and DMDHST for aflatoxins B2 and G2. Next, the versicolorin reductase aflM and the cytochrome P450 monooxygenase aflN are involved in conversion of VERA to demethylsterigmatocystin (DMST). AflX and aflY seem also involved in this step, through probable aflX-mediated epoxide ring-opening step following versicolorin A oxidation and aflY-mediated Baeyer-Villiger oxidation required for the formation of the xanthone ring. The methyltransferase aflO then leads to the modification of DMST to sterigmatocystin (ST), and of DMDHST to dihydrosterigmatocystin (DHST). Both ST and DHST are then substrates of the O-methyltransferase aflP to yield O-methylsterigmatocystin (OMST) and dihydro-O-methylsterigmatocystin (DHOMST), respectively. Finally OMST is converted to aflatoxins B1 and G1, and DHOMST to aflatoxins B2 and G2, via the action of several enzymes including O-methylsterigmatocystin oxidoreductase aflQ, the cytochrome P450 monooxygenase aflU, but also the NADH-dependent flavin oxidoreductase nadA which is specifically required for the synthesis of AFG1. The sequence is that of Averantin hydroxylase from Aspergillus parasiticus (strain ATCC 56775 / NRRL 5862 / SRRC 143 / SU-1).